The chain runs to 882 residues: Alanine--tRNA ligase (882 aa).

The Zn(2+) site is built by His574, His578, Cys682, and His686. Positions 853–882 (GGRGGGKGALAQGGGLDPRKAREALPGLLP) are disordered. Over residues 854–868 (GRGGGKGALAQGGGL) the composition is skewed to gly residues.

It belongs to the class-II aminoacyl-tRNA synthetase family. Requires Zn(2+) as cofactor.

It is found in the cytoplasm. It catalyses the reaction tRNA(Ala) + L-alanine + ATP = L-alanyl-tRNA(Ala) + AMP + diphosphate. In terms of biological role, catalyzes the attachment of alanine to tRNA(Ala) in a two-step reaction: alanine is first activated by ATP to form Ala-AMP and then transferred to the acceptor end of tRNA(Ala). Also edits incorrectly charged Ser-tRNA(Ala) and Gly-tRNA(Ala) via its editing domain. The polypeptide is Alanine--tRNA ligase (Thermus thermophilus (strain ATCC BAA-163 / DSM 7039 / HB27)).